A 239-amino-acid polypeptide reads, in one-letter code: Regulator of G-protein signaling 20 (239 aa).

The tract at residues 1–29 (MRTANGGPRARASPSASPADPGLPEGSER) is disordered. A compositionally biased stretch (low complexity) spans 8 to 19 (PRARASPSASPA). One can recognise an RGS domain in the interval 113 to 229 (SFDNLMVTPA…MNSTVYKDLL (117 aa)).

Forms a complex with G(alpha)z/i2 subunits and mu-opioid receptors; the formation of this complex results in mu-opioid receptor desensitization. Interacts with OPRM1. Fatty acylated. Heavily palmitoylated in the cysteine string motif. Post-translationally, N- and O-glycosylated in synapsomal membranes. In terms of processing, serine phosphorylated in synapsomal membranes. Sumoylated with SUMO1, SUMO2 and SUMO3. Sumoylation increases binding to the G-proteins, G(alpha)-i2 and G(z), and interaction with mu-opioid receptors.

Its subcellular location is the membrane. It localises to the nucleus. The protein resides in the cytoplasm. Its function is as follows. Inhibits signal transduction by increasing the GTPase activity of G protein alpha subunits thereby driving them into their inactive GDP-bound form. Binds selectively to G(z)-alpha and G(alpha)-i2 subunits, accelerates their GTPase activity and regulates their signaling activities. The G(z)-alpha activity is inhibited by the phosphorylation and palmitoylation of the G-protein. Negatively regulates mu-opioid receptor-mediated activation of the G-proteins. In Mus musculus (Mouse), this protein is Regulator of G-protein signaling 20 (Rgs20).